A 1002-amino-acid chain; its full sequence is Solute carrier family 12 member 3 (1002 aa).

Residues 1–135 (MAELPVTELP…KSPGEPVRFG (135 aa)) are Cytoplasmic-facing. A Phosphoserine modification is found at serine 41. Position 44 is a phosphothreonine (threonine 44). Serine 47 carries the post-translational modification Phosphoserine. Threonine 48, threonine 53, and threonine 58 each carry phosphothreonine. Phosphoserine is present on residues serine 71 and serine 89. Threonine 122 carries the phosphothreonine modification. Serine 124 carries the phosphoserine modification. Residues 136–165 (WVKGVMIRCMLNIWGVILYLRLPWITAQAG) traverse the membrane as a discontinuously helical segment. Leucine 146 and tryptophan 149 together coordinate Na(+). The helical transmembrane segment at 166 to 187 (IVLTWLIILLSVMVTSITGLSI) threads the bilayer. Over 188–218 (SAISTNGKVKSGGTYFLISRSLGPELGGSIG) the chain is Cytoplasmic. Residues 219 to 241 (LIFAFANAVGVAMHTVGFAETVR) traverse the membrane as a helical segment. Residues 242–253 (DLLQEYGTPIVD) are Extracellular-facing. 2 helical membrane passes run 254–278 (PIND…AGME) and 279–301 (WESK…YLVG). At 302 to 336 (TLIPASEDKASKGFYSYHGDIFVQNLVPDWRGIDG) the chain is on the extracellular side. A discontinuously helical membrane pass occupies residues 337–358 (SFFGMFSIFFPSATGILAGANI). Glycine 351, isoleucine 352, and leucine 353 together coordinate chloride. The Cytoplasmic portion of the chain corresponds to 359–369 (SGDLKDPAVAI). Residues 370-391 (PKGTLMAIFWTTISYLAISATI) form a helical membrane-spanning segment. The Extracellular portion of the chain corresponds to 392–451 (GSCVVRDASGDVNDTMTPGPGPCEGLACGYGWNFTECSQQRSCRYGLINYYQTMSMVSAF). An N-linked (GlcNAc...) asparagine glycan is attached at asparagine 404. A disulfide bond links cysteine 414 and cysteine 419. The N-linked (GlcNAc...) asparagine glycan is linked to asparagine 424. A disulfide bridge links cysteine 428 with cysteine 434. Residues 452 to 475 (APLITAGIFGATLSSALACLVSAA) traverse the membrane as a helical segment. Residues alanine 462, serine 465, and serine 466 each coordinate Na(+). The Cytoplasmic segment spans residues 476–505 (KVFQCLCEDQLYPLIGFFGKGYGKNREPVR). A helical membrane pass occupies residues 506 to 520 (GYLLAYAIAVAFIII). Residues 521–525 (AELNT) lie on the Extracellular side of the membrane. A helical membrane pass occupies residues 526-542 (IAPIISNFFLCSYALIN). Chloride is bound at residue tyrosine 538. The Cytoplasmic segment spans residues 543-565 (FSCFHASITNSPGWRPSFRYYSK). A run of 2 helical transmembrane segments spans residues 566-585 (WAAL…LTWW) and 586-597 (AALIAIGVVLFL). Topologically, residues 598-1002 (LLYVIYKKPE…QENVLTFYCQ (405 aa)) are cytoplasmic. A scissor helix region spans residues 613–628 (SVQAGSYNLALSYSVG). ATP is bound by residues leucine 646, arginine 653, valine 675, glycine 739, leucine 778, and asparagine 779.

This sequence belongs to the SLC12A transporter family. Homodimer; adopts a domain-swap conformation at the scissor helices connecting the transmembrane domain and C-terminal domain. Interacts with KLHL3. Interacts with IL18R1; this interaction is increased by IL18 treatment. Post-translationally, ubiquitinated; ubiquitination is essential for regulation of endocytosis. In terms of processing, phosphorylated at Thr-53, Thr-58 and Ser-71 by OXSR1/OSR1 and STK39/SPAK downstream of WNK4, promoting its activity. Phosphorylated in response to IL18. Expressed predominantly in kidney, including in distal tubules (at protein level). Detected at low levels in heart, lung and liver. Not detected in normal aorta, but abundantly expressed in fatty streaks and advanced atherosclerotic lesions. In atherosclerotic lesions, expressed in macrophages, smooth muscle cells and endothelial cells (at protein level).

The protein resides in the cell membrane. Its subcellular location is the apical cell membrane. The enzyme catalyses chloride(out) + Na(+)(out) = chloride(in) + Na(+)(in). With respect to regulation, phosphorylation by OXSR1/OSR1 and STK39/SPAK in kidney distal convoluted tubules promotes its activity. Also activated by OXSR1/OSR1 and STK39/SPAK downstream of WNK3. Inhibited by thiazide-type diuretic metolazone. Thiazide drugs, such as polythiazide, specifically inhibit SLC12A3/NCC transporter activity by competing with chloride for binding. In terms of biological role, electroneutral sodium and chloride ion cotransporter, which acts as a key mediator of sodium and chloride reabsorption in kidney distal convoluted tubules. Also acts as a receptor for the pro-inflammatory cytokine IL18, thereby contributing to IL18-induced cytokine production, including IFNG, IL6, IL18 and CCL2. May act either independently of IL18R1, or in a complex with IL18R1. This chain is Solute carrier family 12 member 3, found in Mus musculus (Mouse).